Consider the following 591-residue polypeptide: V-type ATP synthase alpha chain (591 aa).

Position 233 to 240 (233 to 240 (GPFGAGKT)) interacts with ATP.

The protein belongs to the ATPase alpha/beta chains family.

It carries out the reaction ATP + H2O + 4 H(+)(in) = ADP + phosphate + 5 H(+)(out). Produces ATP from ADP in the presence of a proton gradient across the membrane. The V-type alpha chain is a catalytic subunit. This Streptococcus pyogenes serotype M12 (strain MGAS2096) protein is V-type ATP synthase alpha chain.